Here is a 217-residue protein sequence, read N- to C-terminus: Probable transaldolase (217 aa).

Lys83 serves as the catalytic Schiff-base intermediate with substrate.

This sequence belongs to the transaldolase family. Type 3B subfamily.

It is found in the cytoplasm. It catalyses the reaction D-sedoheptulose 7-phosphate + D-glyceraldehyde 3-phosphate = D-erythrose 4-phosphate + beta-D-fructose 6-phosphate. It functions in the pathway carbohydrate degradation; pentose phosphate pathway; D-glyceraldehyde 3-phosphate and beta-D-fructose 6-phosphate from D-ribose 5-phosphate and D-xylulose 5-phosphate (non-oxidative stage): step 2/3. Transaldolase is important for the balance of metabolites in the pentose-phosphate pathway. This is Probable transaldolase from Chelativorans sp. (strain BNC1).